Reading from the N-terminus, the 448-residue chain is Antizyme inhibitor 1 (448 aa).

This sequence belongs to the Orn/Lys/Arg decarboxylase class-II family. ODC antizyme inhibitor subfamily. In terms of assembly, monomer. Interacts with OAZ1 and OAZ3; this interaction disrupts the interaction between the antizyme and ODC1. In terms of processing, ubiquitinated, leading to its proteasomal degradation; a process that is reduced in presence of antizyme OAZ1. As to expression, expressed in various tissues including liver, heart and kidney.

The protein resides in the nucleus. In terms of biological role, antizyme inhibitor (AZI) protein that positively regulates ornithine decarboxylase (ODC) activity and polyamine uptake. AZI is an enzymatically inactive ODC homolog that counteracts the negative effect of ODC antizymes (AZs) OAZ1, OAZ2 and OAZ3 on ODC activity by competing with ODC for antizyme-binding. Inhibits antizyme-dependent ODC degradation and releases ODC monomers from their inactive complex with antizymes, leading to formation of the catalytically active ODC homodimer and restoring polyamine production. In Rattus norvegicus (Rat), this protein is Antizyme inhibitor 1 (Azin1).